A 387-amino-acid polypeptide reads, in one-letter code: MSAEAPVLGILCGGGPAPGLNGVIAGATLYALRLGWKVIGFMEGFKYLCTGDVDVVKAHTIDLTYDIVSRIHFQGGTIIQTSRANPRKSTELQENVRKCLRALKVRYFLTIGGDDTASSAVSVAQGMDGNEISVISCPKTIDNDLPLPSDQSTFGFHTARSLGMEIIRNLMVDSKSAPRWFLVEAMGRSAGHLALGMAEASGAHLCLIPEEFKQDEIEFEDVVELVEATILKRLAYGKNYGVCVLAEGLVSKMSKKALYRLFGNREPPTDPHGHILLDDAELARSLSEELLKRLGNLGIRITPKKIGYELRCADPVAFDAVYTRELGYGAIDAFLNGHSAALIVRENGQVKPVQFKDLLDPATGRVRTRLVDVTSQSFKVARVYMWR.

A diphosphate-binding site is contributed by Gly15. Position 114 (Asp114) interacts with Mg(2+). Substrate-binding positions include Thr140 to Asp142, Met186 to Arg188, Glu247, and Tyr308 to Arg311. Asp142 functions as the Proton acceptor in the catalytic mechanism.

Belongs to the phosphofructokinase type A (PFKA) family. PPi-dependent PFK group II subfamily. Clade 'Short' sub-subfamily. As to quaternary structure, homotetramer. It depends on Mg(2+) as a cofactor.

It localises to the cytoplasm. The enzyme catalyses beta-D-fructose 6-phosphate + diphosphate = beta-D-fructose 1,6-bisphosphate + phosphate + H(+). Its pathway is carbohydrate degradation; glycolysis; D-glyceraldehyde 3-phosphate and glycerone phosphate from D-glucose: step 3/4. Its activity is regulated as follows. Non-allosteric. Its function is as follows. Catalyzes the phosphorylation of D-fructose 6-phosphate, the first committing step of glycolysis. Uses inorganic phosphate (PPi) as phosphoryl donor instead of ATP like common ATP-dependent phosphofructokinases (ATP-PFKs), which renders the reaction reversible, and can thus function both in glycolysis and gluconeogenesis. Consistently, PPi-PFK can replace the enzymes of both the forward (ATP-PFK) and reverse (fructose-bisphosphatase (FBPase)) reactions. The protein is Pyrophosphate--fructose 6-phosphate 1-phosphotransferase 3 (pfk3) of Trichomonas vaginalis (strain ATCC PRA-98 / G3).